An 80-amino-acid polypeptide reads, in one-letter code: Protein FAM229B (80 aa).

The interval 1-44 (MPFQFGTQPRRFPVEGGDSSIELEPGLSSSAACNGKEMSPTRQL) is disordered.

Belongs to the FAM229 family.

The chain is Protein FAM229B (FAM229B) from Homo sapiens (Human).